Here is a 182-residue protein sequence, read N- to C-terminus: UPF0397 protein VV2_1534 (182 aa).

Helical transmembrane passes span 8–28 (VVVI…MFGI), 41–61 (AVLA…VGFI), 72–92 (WGVW…IGLF), 110–130 (FSLF…CSAF), and 146–166 (QLTI…YFIL).

This sequence belongs to the UPF0397 family.

It is found in the cell membrane. This chain is UPF0397 protein VV2_1534, found in Vibrio vulnificus (strain CMCP6).